The chain runs to 223 residues: Small ribosomal subunit protein uS5 (223 aa).

Positions 1-48 (MPGRQRRDGGSGPAGQNGPNSGDNSNARGDNRGGGRDRRDGGRGGNAA) are disordered. The span at 29-42 (GDNRGGGRDRRDGG) shows a compositional bias: basic and acidic residues. The region spanning 53–116 (FIERVVTINR…EEARKSFFRV (64 aa)) is the S5 DRBM domain.

Belongs to the universal ribosomal protein uS5 family. As to quaternary structure, part of the 30S ribosomal subunit. Contacts proteins S4 and S8.

In terms of biological role, with S4 and S12 plays an important role in translational accuracy. Its function is as follows. Located at the back of the 30S subunit body where it stabilizes the conformation of the head with respect to the body. In Rhodococcus erythropolis (strain PR4 / NBRC 100887), this protein is Small ribosomal subunit protein uS5.